A 405-amino-acid chain; its full sequence is UDP-N-acetylglucosamine--N-acetylmuramyl-(pentapeptide) pyrophosphoryl-undecaprenol N-acetylglucosamine transferase (405 aa).

UDP-N-acetyl-alpha-D-glucosamine contacts are provided by residues threonine 11–glycine 13, asparagine 127, arginine 168, serine 191, isoleucine 248, and glutamine 293.

The protein belongs to the glycosyltransferase 28 family. MurG subfamily.

It localises to the cell inner membrane. The enzyme catalyses di-trans,octa-cis-undecaprenyl diphospho-N-acetyl-alpha-D-muramoyl-L-alanyl-D-glutamyl-meso-2,6-diaminopimeloyl-D-alanyl-D-alanine + UDP-N-acetyl-alpha-D-glucosamine = di-trans,octa-cis-undecaprenyl diphospho-[N-acetyl-alpha-D-glucosaminyl-(1-&gt;4)]-N-acetyl-alpha-D-muramoyl-L-alanyl-D-glutamyl-meso-2,6-diaminopimeloyl-D-alanyl-D-alanine + UDP + H(+). The protein operates within cell wall biogenesis; peptidoglycan biosynthesis. In terms of biological role, cell wall formation. Catalyzes the transfer of a GlcNAc subunit on undecaprenyl-pyrophosphoryl-MurNAc-pentapeptide (lipid intermediate I) to form undecaprenyl-pyrophosphoryl-MurNAc-(pentapeptide)GlcNAc (lipid intermediate II). This Sorangium cellulosum (strain So ce56) (Polyangium cellulosum (strain So ce56)) protein is UDP-N-acetylglucosamine--N-acetylmuramyl-(pentapeptide) pyrophosphoryl-undecaprenol N-acetylglucosamine transferase.